The sequence spans 711 residues: C-Jun-amino-terminal kinase-interacting protein 1 (711 aa).

Residues 1 to 27 form a disordered region; the sequence is MAERESGGLGGGAASPPAASPFLGLHI. A compositionally biased stretch (low complexity) spans 14–25; sequence ASPPAASPFLGL. Phosphoserine occurs at positions 15, 29, and 40. A disordered region spans residues 78–371; sequence AGGGGAGSRL…PPRASLSSDT (294 aa). Thr103 carries the post-translational modification Phosphothreonine; by MAPK8, MAPK9 and MAPK10. Over residues 105 to 116 the composition is skewed to acidic residues; it reads GAEDDEEDDDEE. Residues 127–285 form a JNK-binding domain (JBD) region; sequence PKAESGQEPA…EATEEIYLTP (159 aa). Positions 139–149 are enriched in low complexity; the sequence is GQGQSQGQSQG. Ser152 bears the Phosphoserine mark. Residues 157–176 form a minimal inhibitory domain (MID) region; it reads RPKRPTTLNLFPQVPRSQDT. The span at 162–182 shows a compositional bias: polar residues; sequence TTLNLFPQVPRSQDTLNNNSL. Phosphoserine is present on residues Ser181, Ser187, Ser193, Ser195, and Ser196. Polar residues predominate over residues 194–204; the sequence is RSSSPLKTGEQ. Thr205 carries the phosphothreonine; by MAPK8, MAPK9 and MAPK10 modification. The residue at position 214 (Ser214) is a Phosphoserine. Residues 228–244 show a composition bias toward polar residues; that stretch reads DRGTSTDSPCRRSTATQ. Residues 267–277 show a composition bias toward basic and acidic residues; it reads IHYQADVRLEA. The tract at residues 283–471 is interaction with MAP3K7; the sequence is LTPVQRPPDA…NVFMSGRSRS (189 aa). Ser311, Ser328, Ser330, Ser340, Ser355, Ser366, Ser369, Ser407, and Ser409 each carry phosphoserine. 2 short sequence motifs (D-box) span residues 353–360 and 364–372; these read RGSLGEPP and RASLSSDTS. Thr411 carries the post-translational modification Phosphothreonine. Residues 429 to 451 are disordered; that stretch reads EEYEEAPRPQPPACLSEDSTPDE. Phosphoserine occurs at positions 444 and 447. Residue Thr448 is modified to Phosphothreonine. Residues Ser469, Ser471, Ser472, and Ser473 each carry the phosphoserine modification. Positions 471–660 are interaction with VRK2; that stretch reads SSSAESFGLF…PKNNKYFGFI (190 aa). Residues 488–549 enclose the SH3 domain; the sequence is EQEQTHRAIF…PAYYAIEVTK (62 aa). The PID domain occupies 561–700; the sequence is SDWVDQFRVK…FQQFYKQFVE (140 aa).

This sequence belongs to the JIP scaffold family. Forms homo- or heterooligomeric complexes. Binds specific components of the JNK signaling pathway namely, MAPK8/JNK1, MAPK9/JNK2, MAPK10/JNK3, MAP2K7/MKK7, MAP3K11/MLK3 and DLK1. Also binds the proline-rich domain-containing splice variant of apolipoprotein E receptor 2 (ApoER2). Interacts, via the PID domain, with ARHGEF28. Binds the cytoplasmic tails of LRP1 and LRP2 (Megalin). Binds the TPR motif-containing C-terminal of KNS2, then the pre-assembled MAPK8IP1 scaffolding complexes are transported as a cargo of kinesin, to the required subcellular location. Interacts with the cytoplasmic domain of APP. Interacts with DCLK2. Interacts with MAP3K7/TAK1. Interacts with isoform 1 and isoform 2 of VRK2. Found in a complex with SH3RF1, RAC1, MAP3K11/MLK3, MAP2K7/MKK7 and MAPK8/JNK1. Found in a complex with SH3RF1, RAC2, MAP3K7/TAK1, MAP2K7/MKK7, MAPK8/JNK1 and MAPK9/JNK2. Interacts with SH3RF2. Post-translationally, phosphorylated by MAPK8, MAPK9 and MAPK10. Phosphorylation on Thr-103 is also necessary for the dissociation and activation of MAP3K12. Phosphorylated by isoform 1 and isoform 2 of VRK2. Hyperphosphorylated during mitosis following activation of stress-activated and MAP kinases. Ubiquitinated. Two preliminary events are required to prime for ubiquitination; phosphorylation and an increased in intracellular calcium concentration. Then, the calcium influx initiates ubiquitination and degradation by the ubiquitin-proteasome pathway. Highly expressed in brain. Expressed in neurons, localizing to neurite tips in differentiating cells. Also expressed in the pancreas, testis and prostate. Low levels in heart, ovary and small intestine. Decreased levels in pancreatic beta cells sensitize cells to IL-1-beta-induced apoptosis.

It is found in the cytoplasm. The protein localises to the perinuclear region. Its subcellular location is the nucleus. It localises to the endoplasmic reticulum membrane. The protein resides in the mitochondrion membrane. Functionally, the JNK-interacting protein (JIP) group of scaffold proteins selectively mediates JNK signaling by aggregating specific components of the MAPK cascade to form a functional JNK signaling module. Required for JNK activation in response to excitotoxic stress. Cytoplasmic MAPK8IP1 causes inhibition of JNK-regulated activity by retaining JNK in the cytoplasm and inhibiting JNK phosphorylation of c-Jun. May also participate in ApoER2-specific reelin signaling. Directly, or indirectly, regulates GLUT2 gene expression and beta-cell function. Appears to have a role in cell signaling in mature and developing nerve terminals. May function as a regulator of vesicle transport, through interactions with the JNK-signaling components and motor proteins. Functions as an anti-apoptotic protein and whose level seems to influence the beta-cell death or survival response. Acts as a scaffold protein that coordinates with SH3RF1 in organizing different components of the JNK pathway, including RAC1 or RAC2, MAP3K11/MLK3 or MAP3K7/TAK1, MAP2K7/MKK7, MAPK8/JNK1 and/or MAPK9/JNK2 into a functional multiprotein complex to ensure the effective activation of the JNK signaling pathway. Regulates the activation of MAPK8/JNK1 and differentiation of CD8(+) T-cells. In Homo sapiens (Human), this protein is C-Jun-amino-terminal kinase-interacting protein 1 (MAPK8IP1).